The sequence spans 331 residues: Geranylgeranyl pyrophosphate synthase dpmaD (331 aa).

Isopentenyl diphosphate is bound by residues lysine 53, arginine 56, and histidine 85. Residues aspartate 92 and aspartate 96 each coordinate Mg(2+). A dimethylallyl diphosphate-binding site is contributed by arginine 101. Arginine 102 is an isopentenyl diphosphate binding site. Dimethylallyl diphosphate contacts are provided by lysine 179, threonine 180, and glutamine 213. Aspartate 216 provides a ligand contact to Mg(2+). Positions 220, 230, and 240 each coordinate dimethylallyl diphosphate.

It belongs to the FPP/GGPP synthase family. It depends on Mg(2+) as a cofactor.

The enzyme catalyses isopentenyl diphosphate + dimethylallyl diphosphate = (2E)-geranyl diphosphate + diphosphate. It catalyses the reaction isopentenyl diphosphate + (2E)-geranyl diphosphate = (2E,6E)-farnesyl diphosphate + diphosphate. It carries out the reaction isopentenyl diphosphate + (2E,6E)-farnesyl diphosphate = (2E,6E,10E)-geranylgeranyl diphosphate + diphosphate. It participates in secondary metabolite biosynthesis; terpenoid biosynthesis. Its function is as follows. Geranylgeranyl pyrophosphate synthase; part of the gene cluster that mediates the biosynthesis of the diterpenoid pyrones subglutinols A and B. The first step of the pathway is the synthesis of the alpha-pyrone moiety by the polyketide synthase dpmaA via condensation of one acetyl-CoA starter unit with 3 malonyl-CoA units and 2 methylations. The alpha-pyrone is then combined with geranylgeranyl pyrophosphate (GGPP) formed by the GGPP synthase dpmaD through the action of the prenyltransferase dpmaC to yield a linear alpha-pyrone diterpenoid. Subsequent steps in the diterpenoid pyrone biosynthetic pathway involve the decalin core formation, which is initiated by the epoxidation of the C10-C11 olefin by the FAD-dependent oxidoreductase dpmaE, and is followed by a cyclization cascade catalyzed by the terpene cyclase dpmaB. The dehydrogenase dpmaF is then involved in tetrahydrofuran (THF) ring formation at the C5 unit to complete the formation of subglutinols A and B. In Metarhizium anisopliae (Entomophthora anisopliae), this protein is Geranylgeranyl pyrophosphate synthase dpmaD.